A 578-amino-acid polypeptide reads, in one-letter code: Laccase-10 (578 aa).

Residues 1–29 (MGARCLALLLLYGTLLLLLLLPQLPLAGA) form the signal peptide. Plastocyanin-like domains follow at residues 37–153 (NVKL…PKAG) and 163–319 (KDVP…YAPP). N-linked (GlcNAc...) asparagine glycans are attached at residues N42 and N83. Cu cation-binding residues include H87 and H89. The N-linked (GlcNAc...) asparagine glycan is linked to N119. Cu cation-binding residues include H132 and H134. 13 N-linked (GlcNAc...) asparagine glycosylation sites follow: N192, N208, N244, N307, N336, N384, N392, N402, N438, N445, N448, N451, and N461. The Plastocyanin-like 3 domain occupies 428-562 (DFPASPLEPF…KMAWVVNDGP (135 aa)). Positions 479, 482, 484, 541, 542, 543, and 547 each coordinate Cu cation.

This sequence belongs to the multicopper oxidase family. Cu cation is required as a cofactor.

The protein resides in the secreted. It localises to the extracellular space. It is found in the apoplast. The enzyme catalyses 4 hydroquinone + O2 = 4 benzosemiquinone + 2 H2O. Functionally, lignin degradation and detoxification of lignin-derived products. This Oryza sativa subsp. japonica (Rice) protein is Laccase-10 (LAC10).